A 190-amino-acid chain; its full sequence is MAAIKPITTYKGKIVPLFNDNIDTDQIIPKVHLKRISKSGFGPFAFDEWRYLPDGSDNPDFNPNKPQYKGASILITGDNFGCGSSREHAAWALKDYGFHIIIAGSFSDIFYMNCTKNAMLPIVLEKNAREHLAKYVEIEVDLPNQTVSSPDKRFHFEIDETWKNKLVNGLDDIAITLQYESLIEKYEKSL.

The protein belongs to the LeuD family. LeuD type 1 subfamily. As to quaternary structure, heterodimer of LeuC and LeuD.

The catalysed reaction is (2R,3S)-3-isopropylmalate = (2S)-2-isopropylmalate. It functions in the pathway amino-acid biosynthesis; L-leucine biosynthesis; L-leucine from 3-methyl-2-oxobutanoate: step 2/4. Catalyzes the isomerization between 2-isopropylmalate and 3-isopropylmalate, via the formation of 2-isopropylmaleate. The chain is 3-isopropylmalate dehydratase small subunit from Staphylococcus aureus (strain MSSA476).